A 365-amino-acid chain; its full sequence is 1-aminocyclopropane-1-carboxylate oxidase homolog 1 (365 aa).

In terms of domain architecture, Fe2OG dioxygenase spans 212-313; sequence CTNSLLLLGH…RISVACFFSS (102 aa). Positions 238, 240, and 294 each coordinate Fe cation.

This sequence belongs to the iron/ascorbate-dependent oxidoreductase family. Fe cation is required as a cofactor.

The protein is 1-aminocyclopropane-1-carboxylate oxidase homolog 1 of Arabidopsis thaliana (Mouse-ear cress).